The chain runs to 572 residues: Cleavage stimulation factor subunit 2 (572 aa).

Position 14 is a phosphoserine (Ser-14). Positions 16-94 (RSVFVGNIPY…RALRVDNAAS (79 aa)) constitute an RRM domain. An interactions with CSTF3 and SYMPK region spans residues 108–248 (APVIESPYGE…VNGAPPLMQA (141 aa)). Residue Lys-189 forms a Glycyl lysine isopeptide (Lys-Gly) (interchain with G-Cter in SUMO2) linkage. Residues 208-230 (VHSAGPGSGSSVSMNQQNPQTPQ) form a disordered region. Residue Arg-308 is modified to Omega-N-methylarginine. The tract at residues 322–382 (LGDAPNDPRG…RGGPLTEPRP (61 aa)) is disordered. Positions 360 to 373 (PGHDSRGPPPHEMR) are enriched in basic and acidic residues. The 1; approximate repeat unit spans residues 410 to 414 (IDARA). Residues 410-464 (IDARAMEARGLDARGLEARAMEARAMEARAMEARAMEARAMEVRGMEARSMDTRG) form an 11 X 5 AA tandem repeats of M-E-A-R-[AG] region. The stretch at 415-419 (MEARG) is repeat 2. The 3; approximate repeat unit spans residues 420 to 424 (LDARG). The 4; approximate repeat unit spans residues 425–429 (LEARA). Repeat copies occupy residues 430 to 434 (MEARA), 435 to 439 (MEARA), 440 to 444 (MEARA), and 445 to 449 (MEARA). A 9; approximate repeat occupies 450–454 (MEVRG). Residues 455-459 (MEARS) form repeat 10. The 11; approximate repeat unit spans residues 460 to 464 (MDTRG). An omega-N-methylarginine mark is found at Arg-463 and Arg-470. The interval 509–572 (IQGGGQPGGF…EQIQKSTGAP (64 aa)) is interaction with RPO2TC1. The residue at position 519 (Ser-519) is a Phosphoserine.

As to quaternary structure, the CSTF complex is composed of CSTF1 (50 kDa subunit), CSTF2 (64 kDa subunit) and CSTF3 (77 kDa subunit). CSTF2 directly interacts with CSTF3, SYMPK and RPO2TC1. Interacts with HSF1 in heat-stressed cells. Interacts with CPSF2, CPSF3 and FIP1L1. Interacts with DDX1.

The protein localises to the nucleus. One of the multiple factors required for polyadenylation and 3'-end cleavage of mammalian pre-mRNAs. This subunit is directly involved in the binding to pre-mRNAs. This Bos taurus (Bovine) protein is Cleavage stimulation factor subunit 2 (CSTF2).